The following is a 2179-amino-acid chain: Genome polyprotein (2179 aa).

The disordered stretch occupies residues 1 to 20; sequence MGAQVSTQKSGSHENQNILT. Residue Gly-2 is the site of N-myristoyl glycine; by host attachment. The Cytoplasmic portion of the chain corresponds to 2-1491; that stretch reads GAQVSTQKSG…AMNQASMIIN (1490 aa). Residues 564-584 are amphipathic alpha-helix; sequence ALTEGLGDELEEVIVEKTKQT. Residues His-876 and Asp-894 each act as for protease 2A activity in the active site. The Zn(2+) site is built by Cys-911 and Cys-913. Cys-965 (for protease 2A activity) is an active-site residue. Residues Cys-971 and His-973 each contribute to the Zn(2+) site. Positions 1101 to 1173 are membrane-binding; the sequence is NDGWFRKFND…HISNPTQEKR (73 aa). The tract at residues 1101-1239 is oligomerization; that stretch reads NDGWFRKFND…TPGSGKSLTT (139 aa). The segment at 1122 to 1126 is RNA-binding; that stretch reads ANKIS. Residues 1205–1361 enclose the SF3 helicase domain; it reads KNKMVNYMQF…TTYTKNGKLN (157 aa). Residues Cys-1369, Cys-1372, Cys-1381, and Cys-1386 each coordinate Zn(2+). A C4-type zinc finger spans residues 1369–1386; it reads CKDCHQPSNFKKCCPLVC. The interval 1413–1420 is RNA-binding; the sequence is DFKSKMQI. An oligomerization region spans residues 1424-1429; the sequence is LETLFQ. An intramembrane segment occupies 1492-1507; it reads TILMFVSTLGIVYVIY. Residues 1508–2179 lie on the Cytoplasmic side of the membrane; that stretch reads KLFAQTQGPY…VLRRRWLDLF (672 aa). Position 1517 is an O-(5'-phospho-RNA)-tyrosine (Tyr-1517). Positions 1538-1715 constitute a Peptidase C3 domain; the sequence is GPNTEFALSL…FSAQLKKQYF (178 aa). Catalysis depends on for protease 3C activity residues His-1577, Glu-1608, and Cys-1683. The 115-residue stretch at 1946-2060 folds into the RdRp catalytic domain; that stretch reads GHLMAFDYSN…SYPYELDPQV (115 aa). Positions 1952 and 2046 each coordinate Mg(2+).

Belongs to the picornaviruses polyprotein family. In terms of assembly, interacts with capsid protein VP1 and capsid protein VP3 to form heterotrimeric protomers. Interacts with capsid protein VP0, and capsid protein VP3 to form heterotrimeric protomers. Five protomers subsequently associate to form pentamers which serve as building blocks for the capsid. Interacts with capsid protein VP2, capsid protein VP3 and capsid protein VP4 following cleavage of capsid protein VP0. Interacts with host ICAM1. As to quaternary structure, interacts with capsid protein VP1 and capsid protein VP3 in the mature capsid. In terms of assembly, interacts with capsid protein VP0 and capsid protein VP1 to form heterotrimeric protomers. Five protomers subsequently associate to form pentamers which serve as building blocks for the capsid. Interacts with capsid protein VP4 in the mature capsid. Interacts with protein 2C; this interaction may be important for virion morphogenesis. Interacts with capsid protein VP1 and capsid protein VP3. As to quaternary structure, homodimer. In terms of assembly, homohexamer; forms a hexameric ring structure with 6-fold symmetry characteristic of AAA+ ATPases. Interacts (via N-terminus) with host RTN3 (via reticulon domain); this interaction is important for viral replication. Interacts with capsid protein VP3; this interaction may be important for virion morphogenesis. Interacts with protein 3CD. As to quaternary structure, homodimer. Interacts with host GBF1. Interacts (via GOLD domain) with host ACBD3 (via GOLD domain); this interaction allows the formation of a viral protein 3A/ACBD3 heterotetramer with a 2:2 stoichiometry, which will stimulate the recruitment of host PI4KB in order to synthesize PI4P at the viral RNA replication sites. In terms of assembly, interacts with RNA-directed RNA polymerase. Interacts with protein 3AB and with RNA-directed RNA polymerase. As to quaternary structure, interacts with Viral protein genome-linked and with protein 3CD. Requires Mg(2+) as cofactor. Post-translationally, specific enzymatic cleavages in vivo by the viral proteases yield processing intermediates and the mature proteins. In terms of processing, myristoylation is required for the formation of pentamers during virus assembly. Further assembly of 12 pentamers and a molecule of genomic RNA generates the provirion. During virion maturation, immature virions are rendered infectious following cleavage of VP0 into VP4 and VP2. This maturation seems to be an autocatalytic event triggered by the presence of RNA in the capsid and it is followed by a conformational change infectious virion. Post-translationally, myristoylation is required during RNA encapsidation and formation of the mature virus particle. In terms of processing, VPg is uridylylated by the polymerase into VPg-pUpU. This acts as a nucleotide-peptide primer for the genomic RNA replication.

It is found in the virion. Its subcellular location is the host cytoplasm. The protein localises to the host cytoplasmic vesicle membrane. The protein resides in the host nucleus. It catalyses the reaction a ribonucleoside 5'-triphosphate + H2O = a ribonucleoside 5'-diphosphate + phosphate + H(+). It carries out the reaction Selective cleavage of Tyr-|-Gly bond in the picornavirus polyprotein.. The catalysed reaction is RNA(n) + a ribonucleoside 5'-triphosphate = RNA(n+1) + diphosphate. The enzyme catalyses Selective cleavage of Gln-|-Gly bond in the poliovirus polyprotein. In other picornavirus reactions Glu may be substituted for Gln, and Ser or Thr for Gly.. Its activity is regulated as follows. Replication or transcription is subject to high level of random mutations by the nucleotide analog ribavirin. In terms of biological role, forms an icosahedral capsid of pseudo T=3 symmetry with capsid proteins VP2 and VP3. The capsid is 300 Angstroms in diameter, composed of 60 copies of each capsid protein and enclosing the viral positive strand RNA genome. Capsid protein VP1 mainly forms the vertices of the capsid. Capsid protein VP1 interacts with host ICAM1 to provide virion attachment to target host cells. This attachment induces virion internalization. Tyrosine kinases are probably involved in the entry process. After binding to its receptor, the capsid undergoes conformational changes. Capsid protein VP1 N-terminus (that contains an amphipathic alpha-helix) and capsid protein VP4 are externalized. Together, they shape a pore in the host membrane through which viral genome is translocated to host cell cytoplasm. After genome has been released, the channel shrinks. Functionally, forms an icosahedral capsid of pseudo T=3 symmetry with capsid proteins VP2 and VP3. The capsid is 300 Angstroms in diameter, composed of 60 copies of each capsid protein and enclosing the viral positive strand RNA genome. Lies on the inner surface of the capsid shell. After binding to the host receptor, the capsid undergoes conformational changes. Capsid protein VP4 is released, Capsid protein VP1 N-terminus is externalized, and together, they shape a pore in the host membrane through which the viral genome is translocated into the host cell cytoplasm. Its function is as follows. Component of immature procapsids, which is cleaved into capsid proteins VP4 and VP2 after maturation. Allows the capsid to remain inactive before the maturation step. In terms of biological role, cysteine protease that cleaves viral polyprotein and specific host proteins. It is responsible for the autocatalytic cleavage between the P1 and P2 regions, which is the first cleavage occurring in the polyprotein. Also cleaves the host translation initiation factor EIF4G1, in order to shut down the capped cellular mRNA translation. Inhibits the host nucleus-cytoplasm protein and RNA trafficking by cleaving host members of the nuclear pores including NUP62 and NUP153. Counteracts stress granule formation probably by antagonizing its assembly or promoting its dissassembly. Functionally, plays an essential role in the virus replication cycle by acting as a viroporin. Creates a pore in the host endoplasmic reticulum and as a consequence releases Ca2+ in the cytoplasm of infected cell. In turn, high levels of cytoplasmic calcium may trigger membrane trafficking and transport of viral ER-associated proteins to viroplasms, sites of viral genome replication. Induces and associates with structural rearrangements of intracellular membranes. Displays RNA-binding, nucleotide binding and NTPase activities. May play a role in virion morphogenesis and viral RNA encapsidation by interacting with the capsid protein VP3. Its function is as follows. Localizes the viral replication complex to the surface of membranous vesicles. Together with protein 3CD binds the Cis-Active RNA Element (CRE) which is involved in RNA synthesis initiation. Acts as a cofactor to stimulate the activity of 3D polymerase, maybe through a nucleid acid chaperone activity. In terms of biological role, localizes the viral replication complex to the surface of membranous vesicles. It inhibits host cell endoplasmic reticulum-to-Golgi apparatus transport and causes the disassembly of the Golgi complex, possibly through GBF1 interaction. This would result in depletion of MHC, trail receptors and IFN receptors at the host cell surface. Plays an essential role in viral RNA replication by recruiting ACBD3 and PI4KB at the viral replication sites, thereby allowing the formation of the rearranged membranous structures where viral replication takes place. Functionally, acts as a primer for viral RNA replication and remains covalently bound to viral genomic RNA. VPg is uridylylated prior to priming replication into VPg-pUpU. The oriI viral genomic sequence may act as a template for this. The VPg-pUpU is then used as primer on the genomic RNA poly(A) by the RNA-dependent RNA polymerase to replicate the viral genome. During genome replication, the VPg-RNA linkage is removed by the host TDP2, thereby accelerating replication. During the late stage of the replication cycle, host TDP2 is excluded from sites of viral RNA synthesis and encapsidation, allowing for the generation of progeny virions. Involved in the viral replication complex and viral polypeptide maturation. It exhibits protease activity with a specificity and catalytic efficiency that is different from protease 3C. Protein 3CD lacks polymerase activity. Protein 3CD binds to the 5'UTR of the viral genome. Its function is as follows. Major viral protease that mediates proteolytic processing of the polyprotein. Cleaves host EIF5B, contributing to host translation shutoff. Cleaves also host PABPC1, contributing to host translation shutoff. Cleaves host NLRP1, triggers host N-glycine-mediated degradation of the autoinhibitory NLRP1 N-terminal fragment. In terms of biological role, replicates the viral genomic RNA on the surface of intracellular membranes. May form linear arrays of subunits that propagate along a strong head-to-tail interaction called interface-I. Covalently attaches UMP to a tyrosine of VPg, which is used to prime RNA synthesis. The positive stranded RNA genome is first replicated at virus induced membranous vesicles, creating a dsRNA genomic replication form. This dsRNA is then used as template to synthesize positive stranded RNA genomes. ss(+)RNA genomes are either translated, replicated or encapsidated. In Homo sapiens (Human), this protein is Genome polyprotein.